We begin with the raw amino-acid sequence, 282 residues long: MGSRFRTTVLLAALTALIIWIGGAVGGSHGMMIAFVLALVMNVGSYWFSDKIVLAMYRAQPLSEADAPQIYRIVRELSASANLPMPRVYLIPESAPNAFATGRNPENAVIAVTEGLWRILTPDEIRGVLAHELAHVKNRDILVSSIAATLAGVVMILARMAQWGALFGGGRSSSDEDSGGGMLGLVVTAILAPIAAMLIQLAISRSREYLADETGAAFSHNPESLARALEKLAMASHQNPMEDASPSTAHLFIVNPLSGRSLANLFSTHPPIEERIRRLRSM.

Transmembrane regions (helical) follow at residues 7-26 (TTVL…GAVG) and 30-49 (GMMI…YWFS). His131 is a binding site for Zn(2+). Glu132 is a catalytic residue. His135 lines the Zn(2+) pocket. A run of 2 helical transmembrane segments spans residues 141 to 161 (ILVS…ARMA) and 183 to 203 (LGLV…QLAI). Glu208 serves as a coordination point for Zn(2+).

The protein belongs to the peptidase M48B family. Zn(2+) serves as cofactor.

It is found in the cell inner membrane. The polypeptide is Protease HtpX homolog (Syntrophobacter fumaroxidans (strain DSM 10017 / MPOB)).